The following is a 1102-amino-acid chain: Voltage-gated delayed rectifier potassium channel KCNH8 (1102 aa).

Topologically, residues 1-225 (MPVMKGLLAP…HFSTFKAGWD (225 aa)) are cytoplasmic. A PAS domain is found at 18 to 90 (IATRFDGTHS…LQIEKSLEEK (73 aa)). The PAC domain maps to 93 to 145 (FKGEIMFYKKNGAPFWCLLDIVPIKNEKGDVVLFLASFKDITDTKVKITSEDK). Basic and acidic residues predominate over residues 142–151 (SEDKKEDRTK). A disordered region spans residues 142–162 (SEDKKEDRTKGRSRAGSHFDS). A helical membrane pass occupies residues 226 to 246 (WLILLATFYVAVTVPYNVCFI). Residues 247–255 (GNEDLSTTR) lie on the Extracellular side of the membrane. Residues 256-276 (STTVSDIAVEILFIIDIILNF) traverse the membrane as a helical segment. Topologically, residues 277–298 (RTTYVSKSGQVIFEARSICIHY) are cytoplasmic. The helical transmembrane segment at 299-319 (VTTWFIIDLIAALPFDLLYAF) threads the bilayer. The N-linked (GlcNAc...) asparagine glycan is linked to Asn320. At 320–327 (NVTVVSLV) the chain is on the extracellular side. The chain crosses the membrane as a helical; Voltage-sensor span at residues 328–348 (HLLKTVRLLRLLRLLQKLDRY). Topologically, residues 349 to 357 (SQHSTIVLT) are cytoplasmic. The helical transmembrane segment at 358-378 (LLMSMFALLAHWMACIWYVIG) threads the bilayer. Residues 379 to 419 (KMEREDNSLLKWEVGWLHELGKRLESPYYGNNTLGGPSIRS) lie on the Extracellular side of the membrane. Asn409 carries an N-linked (GlcNAc...) asparagine glycan. The pore-forming intramembrane region spans 420–440 (AYIAALYFTLSSLTSVGFGNV). Residues 434 to 439 (SVGFGN) carry the Selectivity filter motif. Residues 441 to 448 (SANTDAEK) are Extracellular-facing. Residues 449-469 (IFSICTMLIGALMHALVFGNV) form a helical membrane-spanning segment. Topologically, residues 470-1102 (TAIIQRMYSR…DVKDSKAINV (633 aa)) are cytoplasmic. The tract at residues 551–668 (LFECASRGCL…HKFVEDIQHD (118 aa)) is cNMP-binding domain. Residues 684–693 (RLSNKSTVSQ) are compositionally biased toward polar residues. Disordered regions lie at residues 684–743 (RLSN…KKTG), 764–841 (HSPI…PEPR), and 960–991 (LVGS…YSPS). The segment covering 710–723 (VEDEEEEEVEEEET) has biased composition (acidic residues). A compositionally biased stretch (polar residues) spans 724–737 (TSLSPIYTRGSSVS). A compositionally biased stretch (basic and acidic residues) spans 968-984 (TEAHEQNPADSELHHSP).

The protein belongs to the potassium channel family. H (Eag) (TC 1.A.1.20) subfamily. Kv12.1/KCNH8 sub-subfamily. The potassium channel is probably composed of a homo- or heterotetrameric complex of pore-forming alpha subunits that can associate with modulating beta subunits.

The protein resides in the membrane. The enzyme catalyses K(+)(in) = K(+)(out). In terms of biological role, pore-forming (alpha) subunit of a voltage-gated delayed rectifier potassium channel that mediates outward-rectifying potassium currents. Elicits a slowly activating, non-inactivating and slowly deactivation outwards potassium current at depolarizating voltages from -30 mV to +50mV. Shows no obvious change in the activation rate from different holding potentials. Activation is strongly dependent on the pH of the external solution. The polypeptide is Voltage-gated delayed rectifier potassium channel KCNH8 (Mus musculus (Mouse)).